The sequence spans 471 residues: U1 small nuclear ribonucleoprotein 70 kDa (471 aa).

Positions 48–78 are disordered; sequence FEDPRDAPPPTRAETREERMERKRREKIERR. Basic and acidic residues predominate over residues 60-78; that stretch reads AETREERMERKRREKIERR. Positions 92–202 are required for interaction with U1 RNA; the sequence is HNDQNAQGDA…GGGLGGTRRG (111 aa). One can recognise an RRM domain in the interval 103-184; that stretch reads KTLFVARVNY…LVDVERGRTV (82 aa). The tract at residues 187–471 is disordered; that stretch reads WRPRRLGGGL…NGYMMEPPME (285 aa). A compositionally biased stretch (gly residues) spans 192 to 201; it reads LGGGLGGTRR. The span at 207 to 245 shows a compositional bias: basic and acidic residues; sequence NIRHSGRDDTSRYDERDRDRERERDRRERSRERDKERER. The span at 246–259 shows a compositional bias: basic residues; sequence RRSRSRERRRRSRS. Basic and acidic residues predominate over residues 260–293; sequence REKEERKRSRERSRDKDKDKDKDKDKEKDKDKDR. Basic residues predominate over residues 294–303; the sequence is DRKRRSRSRE. Composition is skewed to basic and acidic residues over residues 304-321 and 344-428; these read RKRERDRDREKKEDRVEG and IELK…ERVP.

Component of the U1 snRNP. The U1 snRNP is composed of the U1 snRNA and the 7 core Sm proteins snrpb, snrpd1, snrpd2, snrpd3, snrpe, snrpf and snrpg that assemble in a heptameric protein ring on the Sm site of the small nuclear RNA to form the core snRNP, and at least three U1 snRNP-specific proteins snrnp70/U1-70K, snrpa/U1-A and snrpc/U1-C.

It localises to the nucleus speckle. The protein localises to the nucleus. It is found in the nucleoplasm. Its function is as follows. Component of the spliceosomal U1 snRNP, which is essential for recognition of the pre-mRNA 5' splice-site and the subsequent assembly of the spliceosome. snrnp70 binds to the loop I region of U1-snRNA. The polypeptide is U1 small nuclear ribonucleoprotein 70 kDa (snrnp70) (Xenopus tropicalis (Western clawed frog)).